Here is a 316-residue protein sequence, read N- to C-terminus: L-lactate dehydrogenase (316 aa).

Residues M14, 14-150 (MIGG…IIGL), I15, D35, Y67, G81, F82, V125, N127, and L150 contribute to the NAD(+) site. R95 serves as a coordination point for substrate. Residues R158 and H182 each contribute to the substrate site. H182 (proton acceptor) is an active-site residue.

Belongs to the LDH/MDH superfamily. LDH family. Homotetramer.

The catalysed reaction is (S)-lactate + NAD(+) = pyruvate + NADH + H(+). It functions in the pathway fermentation; pyruvate fermentation to lactate; (S)-lactate from pyruvate: step 1/1. In Plasmodium falciparum (isolate CDC / Honduras), this protein is L-lactate dehydrogenase.